Consider the following 363-residue polypeptide: Two-pore potassium channel 1 (363 aa).

A disordered region spans residues 1-61 (MSSDAARTPL…DDVKIDEPPP (61 aa)). The Cytoplasmic segment spans residues 1–78 (MSSDAARTPL…FSDLNPNLRR (78 aa)). Residues 31 to 42 (SSRKRRLRRSRS) are compositionally biased toward basic residues. Residues 79-99 (VIMFLALYLTIGTLCFYLVRD) form a helical membrane-spanning segment. An intramembrane region (pore-forming) is located at residues 111-130 (DALYFCIVTMTTVGYGDLVP). A helical membrane pass occupies residues 137 to 157 (LLACAFVFSGMVLVGHLLSRA). Topologically, residues 158–197 (ADYLVEKQEALLVRAFHLRQSFGPTDILKELHTNKLRYKC) are cytoplasmic. A helical transmembrane segment spans residues 198 to 218 (YATCLVLVVLFIVGTIFLVMV). Residues 225-244 (SAFYCVCSTVTTLGYGDKSF) constitute an intramembrane region (pore-forming). The chain crosses the membrane as a helical span at residues 251-271 (LFAVFWILTSSICLAQFFLYV). Over 272–363 (AELNTENKQR…LAQTTSQIQR (92 aa)) the chain is Cytoplasmic. EF-hand domains lie at 288–323 (LTRR…EMGK) and 327–362 (KDIS…SQIQ). The Endoplasmic reticulum release signal motif lies at 296–298 (DLE). Residues Asp-301, Asp-303, Asp-305, Glu-312, Asp-340, Asp-342, Ser-344, Thr-346, and Asp-351 each contribute to the Ca(2+) site.

It belongs to the two pore domain potassium channel (TC 1.A.1.7) family. As to quaternary structure, homodimer. Interacts with GRF1 and GRF6, but only GRF6 modulates the channel activity. In terms of processing, phosphorylation at Ser-42 increases and stabilizes the interaction with 14-3-3 proteins. As to expression, detected in mesophyll cells, guard cells and vascular tissues of the leaves. Expressed in the hilum, where the funiculus is attached during fruit maturation and in the embryo. Also expressed at a lower level in seedlings, root tips and elongation zones, and flowers. Could be detected in mitotically active tissues.

Its subcellular location is the vacuole membrane. Could be activated by protein kinase C. Strongly induced by calcium. Blocked by barium, tetraethylammonium (TEA), quinine and quinidine. In terms of biological role, voltage-independent, large conductance and potassium-selective tonoplast ion channel. Regulated by cytoplasmic calcium and pH. Does not mediate slow-vacuolar (SV) ionic currents, but essential to establish VK currents. Has some permeability for Rb(+) and NH(4)(+), but none for Na(+), Cs(+) or Li(+). Involved in intracellular K(+) redistribution and/or K(+) retranslocation between different tissues. This Arabidopsis thaliana (Mouse-ear cress) protein is Two-pore potassium channel 1 (TPK1).